The sequence spans 150 residues: uncharacterized protein (150 aa).

The protein localises to the plastid. It is found in the chloroplast. This is an uncharacterized protein from Pyropia yezoensis (Susabi-nori).